The sequence spans 69 residues: Conotoxin Cal12.1p5 (69 aa).

Residues 1–23 (DLITNSYTRGKPRHVTSWRNLKT) constitute a propeptide that is removed on maturation.

Post-translationally, contains 4 disulfide bonds. Expressed by the venom duct.

The protein localises to the secreted. This chain is Conotoxin Cal12.1p5, found in Californiconus californicus (California cone).